We begin with the raw amino-acid sequence, 253 residues long: Imidazole glycerol phosphate synthase subunit HisF (253 aa).

Active-site residues include D11 and D130.

It belongs to the HisA/HisF family. As to quaternary structure, heterodimer of HisH and HisF.

It is found in the cytoplasm. It carries out the reaction 5-[(5-phospho-1-deoxy-D-ribulos-1-ylimino)methylamino]-1-(5-phospho-beta-D-ribosyl)imidazole-4-carboxamide + L-glutamine = D-erythro-1-(imidazol-4-yl)glycerol 3-phosphate + 5-amino-1-(5-phospho-beta-D-ribosyl)imidazole-4-carboxamide + L-glutamate + H(+). It participates in amino-acid biosynthesis; L-histidine biosynthesis; L-histidine from 5-phospho-alpha-D-ribose 1-diphosphate: step 5/9. In terms of biological role, IGPS catalyzes the conversion of PRFAR and glutamine to IGP, AICAR and glutamate. The HisF subunit catalyzes the cyclization activity that produces IGP and AICAR from PRFAR using the ammonia provided by the HisH subunit. This Paracoccus denitrificans (strain Pd 1222) protein is Imidazole glycerol phosphate synthase subunit HisF.